Reading from the N-terminus, the 155-residue chain is 6,7-dimethyl-8-ribityllumazine synthase (155 aa).

Residues Phe23, 57–59 (AFE), and 81–83 (AVI) each bind 5-amino-6-(D-ribitylamino)uracil. 86–87 (ST) provides a ligand contact to (2S)-2-hydroxy-3-oxobutyl phosphate. His89 acts as the Proton donor in catalysis. Residue Phe114 coordinates 5-amino-6-(D-ribitylamino)uracil. Arg128 serves as a coordination point for (2S)-2-hydroxy-3-oxobutyl phosphate.

It belongs to the DMRL synthase family.

It carries out the reaction (2S)-2-hydroxy-3-oxobutyl phosphate + 5-amino-6-(D-ribitylamino)uracil = 6,7-dimethyl-8-(1-D-ribityl)lumazine + phosphate + 2 H2O + H(+). It functions in the pathway cofactor biosynthesis; riboflavin biosynthesis; riboflavin from 2-hydroxy-3-oxobutyl phosphate and 5-amino-6-(D-ribitylamino)uracil: step 1/2. Functionally, catalyzes the formation of 6,7-dimethyl-8-ribityllumazine by condensation of 5-amino-6-(D-ribitylamino)uracil with 3,4-dihydroxy-2-butanone 4-phosphate. This is the penultimate step in the biosynthesis of riboflavin. This is 6,7-dimethyl-8-ribityllumazine synthase from Geobacter sp. (strain M21).